An 89-amino-acid chain; its full sequence is Small ribosomal subunit protein bS20 (89 aa).

Positions 1–20 are disordered; that stretch reads MANHKSAEKRARQTIKRTER.

The protein belongs to the bacterial ribosomal protein bS20 family.

In terms of biological role, binds directly to 16S ribosomal RNA. The chain is Small ribosomal subunit protein bS20 from Campylobacter concisus (strain 13826).